Reading from the N-terminus, the 1481-residue chain is Neuropathy target esterase sws (1481 aa).

At 1-34 (MDVLELLRASANGCYNTIFSDAWSQYVSQQITSS) the chain is on the lumenal side. Residues 35–55 (LYLYIALGILTVLFVAWFIYF) traverse the membrane as a helical segment. Residues 56–1481 (KRLARLRLRD…KENKNVNTKN (1426 aa)) lie on the Cytoplasmic side of the membrane. Residue 175–302 (IFGHFEKPVF…IRVIQVIMIR (128 aa)) coordinates a nucleoside 3',5'-cyclic phosphate. The disordered stretch occupies residues 336–420 (HLNSQSQSSQ…NNVQLPEVHG (85 aa)). Low complexity-rich tracts occupy residues 339-379 (SQSQ…LPLQ) and 401-412 (SGPNPNPNSGNN). The residue at position 448 (Ser-448) is a Phosphoserine. A nucleoside 3',5'-cyclic phosphate contacts are provided by residues 492–624 (ELGL…VVRR) and 613–740 (IVLD…LSHR). Residues 967-1133 (LVLGGGGARG…VNNLPGHLWR (167 aa)) form the PNPLA domain. The GXGXXG signature appears at 971–976 (GGGARG). The short motif at 998–1002 (GVSIG) is the GXSXG element. The Nucleophile role is filled by Ser-1000. The active-site Proton acceptor is the Asp-1120. The DGA/G motif lies at 1120–1122 (DGG). Position 1214 is a phosphoserine (Ser-1214). Positions 1366–1481 (LSLSEAEMDS…KENKNVNTKN (116 aa)) are disordered. Composition is skewed to basic and acidic residues over residues 1379–1390 (IDFRSDSKKDKA) and 1400–1410 (KDNEDKTDAVD). Residues 1445-1457 (TNTMTTQTTSPTT) are compositionally biased toward low complexity.

The protein belongs to the NTE family. Interacts with Pka-C3; interaction inhibits the catalytic function of Pka-C3 and the esterase activity of sws.

The protein resides in the endoplasmic reticulum membrane. The catalysed reaction is a 1-acyl-sn-glycero-3-phosphocholine + H2O = sn-glycerol 3-phosphocholine + a fatty acid + H(+). Its function is as follows. Phospholipase B that deacylates intracellular phosphatidylcholine (PtdCho), generating glycerophosphocholine (GroPtdCho). This deacylation occurs at both sn-2 and sn-1 positions of PtdCho. Its specific chemical modification by certain organophosphorus (OP) compounds leads to distal axonopathy. Plays a role in the signaling mechanism between neurons and glia that regulates glia wrapping during development of the adult brain. Essential for membrane lipid homeostasis and cell survival in both neurons and glia of the adult brain. This Drosophila willistoni (Fruit fly) protein is Neuropathy target esterase sws.